The chain runs to 224 residues: Uracil-DNA glycosylase 2 (224 aa).

The active-site Proton acceptor is Asp64.

This sequence belongs to the uracil-DNA glycosylase (UDG) superfamily. UNG family.

The protein localises to the cytoplasm. It catalyses the reaction Hydrolyzes single-stranded DNA or mismatched double-stranded DNA and polynucleotides, releasing free uracil.. Functionally, excises uracil residues from the DNA which can arise as a result of misincorporation of dUMP residues by DNA polymerase or due to deamination of cytosine. In Listeria innocua serovar 6a (strain ATCC BAA-680 / CLIP 11262), this protein is Uracil-DNA glycosylase 2.